Consider the following 965-residue polypeptide: Transmembrane channel-like protein 5 (965 aa).

Polar residues-rich tracts occupy residues Met1–Tyr10 and Ser20–Arg31. The segment at Met1 to Pro235 is disordered. Residues Met1–Lys417 are Extracellular-facing. The span at Thr61 to Ala70 shows a compositional bias: basic and acidic residues. Positions Gln166–Pro181 are enriched in polar residues. Phosphoserine is present on Ser248. The chain crosses the membrane as a helical span at residues Phe418–Gly438. The Cytoplasmic portion of the chain corresponds to Glu439–Gln444. A helical transmembrane segment spans residues Phe445–Tyr467. The Extracellular segment spans residues Thr468 to Gln484. A helical transmembrane segment spans residues Leu485–Ser505. Residues Met506–His578 lie on the Cytoplasmic side of the membrane. A helical membrane pass occupies residues Val579–Leu599. The Extracellular segment spans residues Ala600–Pro613. Residues Gly614–Tyr634 form a helical membrane-spanning segment. The Cytoplasmic segment spans residues Ser635–Asn657. Residues Ile658 to Leu678 traverse the membrane as a helical segment. Residues Ser679–Asp691 lie on the Extracellular side of the membrane. Residues Ile692–Phe712 form a helical membrane-spanning segment. Residues Leu713–Trp747 lie on the Cytoplasmic side of the membrane. Residues Leu748–Phe768 traverse the membrane as a helical segment. Residues Tyr769–Phe794 lie on the Extracellular side of the membrane. The chain crosses the membrane as a helical span at residues Phe795–Ile815. Residues Trp816–Asn859 are Cytoplasmic-facing. Residues Leu860–Leu880 form a helical membrane-spanning segment. Topologically, residues Tyr881–Ala965 are extracellular.

Belongs to the TMC family.

Its subcellular location is the membrane. Probable component of an ion channel. Molecular function hasn't been characterized yet. This is Transmembrane channel-like protein 5 from Rattus norvegicus (Rat).